The following is a 151-amino-acid chain: Neuroglobin (151 aa).

Residues 1-149 (MELPEPELIR…VVQAMSRGWG (149 aa)) enclose the Globin domain. Heme b contacts are provided by H64 and H96.

The protein belongs to the globin family. Monomer. Homodimer and homotetramer; disulfide-linked. Mainly monomeric but also detected as part of homodimers and homotetramers. Interacts with 14-3-3 proteins; regulates the phosphorylation of NGB. Could interact (ferrous form) with G-alpha(i) proteins (GTP-bound form). Phosphorylated during hypoxia by ERK1/ERK2. Phosphorylation regulates the heme pocket hexacoordination preventing the association of His-64 with the heme metal center. Thereby, promotes the access of dioxygen and nitrite to the heme and stimulates the nitrite reductase activity. Phosphorylation during hypoxia is stabilized by 14-3-3 proteins.

It is found in the cytoplasm. The protein localises to the cytosol. Its subcellular location is the mitochondrion matrix. The catalysed reaction is Fe(III)-heme b-[protein] + nitric oxide + H2O = Fe(II)-heme b-[protein] + nitrite + 2 H(+). Its function is as follows. Monomeric globin with a bis-histidyl six-coordinate heme-iron atom through which it can bind dioxygen, carbon monoxide and nitric oxide. Could help transport oxygen and increase its availability to the metabolically active neuronal tissues, though its low quantity in tissues as well as its high affinity for dioxygen, which may limit its oxygen-releasing ability, argue against it. The ferrous/deoxygenated form exhibits a nitrite reductase activity and it could produce nitric oxide which in turn inhibits cellular respiration in response to hypoxia. In its ferrous/deoxygenated state, it may also exhibit GDI (Guanine nucleotide Dissociation Inhibitor) activity toward heterotrimeric G-alpha proteins, thereby regulating signal transduction to facilitate neuroprotective responses in the wake of hypoxia and associated oxidative stress. The protein is Neuroglobin of Bos taurus (Bovine).